The following is a 777-amino-acid chain: Elongation factor G, mitochondrial (777 aa).

One can recognise a tr-type G domain in the interval 34–338 (LRQRNVGISA…GMCAYLPNPM (305 aa)). GTP is bound by residues 43-50 (AHIDSGKT), 136-140 (DTPGH), and 190-193 (NKMD).

Belongs to the TRAFAC class translation factor GTPase superfamily. Classic translation factor GTPase family. EF-G/EF-2 subfamily.

It is found in the mitochondrion. It participates in protein biosynthesis; polypeptide chain elongation. Mitochondrial GTPase that catalyzes the GTP-dependent ribosomal translocation step during translation elongation. During this step, the ribosome changes from the pre-translocational (PRE) to the post-translocational (POST) state as the newly formed A-site-bound peptidyl-tRNA and P-site-bound deacylated tRNA move to the P and E sites, respectively. Catalyzes the coordinated movement of the two tRNA molecules, the mRNA and conformational changes in the ribosome. The protein is Elongation factor G, mitochondrial of Malassezia globosa (strain ATCC MYA-4612 / CBS 7966) (Dandruff-associated fungus).